We begin with the raw amino-acid sequence, 114 residues long: uncharacterized protein (114 aa).

A disordered region spans residues 1-37 (MLKKILSLFKKEEPKTEEKPTEVEEKKEEREEKEEKK). Positions 9 to 37 (FKKEEPKTEEKPTEVEEKKEEREEKEEKK) are enriched in basic and acidic residues.

This is an uncharacterized protein from Aquifex aeolicus (strain VF5).